The primary structure comprises 157 residues: SsrA-binding protein (157 aa).

It belongs to the SmpB family.

It localises to the cytoplasm. Functionally, required for rescue of stalled ribosomes mediated by trans-translation. Binds to transfer-messenger RNA (tmRNA), required for stable association of tmRNA with ribosomes. tmRNA and SmpB together mimic tRNA shape, replacing the anticodon stem-loop with SmpB. tmRNA is encoded by the ssrA gene; the 2 termini fold to resemble tRNA(Ala) and it encodes a 'tag peptide', a short internal open reading frame. During trans-translation Ala-aminoacylated tmRNA acts like a tRNA, entering the A-site of stalled ribosomes, displacing the stalled mRNA. The ribosome then switches to translate the ORF on the tmRNA; the nascent peptide is terminated with the 'tag peptide' encoded by the tmRNA and targeted for degradation. The ribosome is freed to recommence translation, which seems to be the essential function of trans-translation. The sequence is that of SsrA-binding protein from Chromohalobacter salexigens (strain ATCC BAA-138 / DSM 3043 / CIP 106854 / NCIMB 13768 / 1H11).